A 153-amino-acid chain; its full sequence is uncharacterized protein (153 aa).

Residues 16–40 form a disordered region; it reads DEQTPLLNNDGIQRTPPSAEADMSL. Positions 20–31 are enriched in polar residues; the sequence is PLLNNDGIQRTP.

This is an uncharacterized protein from Schizosaccharomyces pombe (strain 972 / ATCC 24843) (Fission yeast).